Here is a 472-residue protein sequence, read N- to C-terminus: Glutamate--tRNA ligase 1 (472 aa).

The short motif at 9–19 (PSPTGLLHVGN) is the 'HIGH' region element. The segment covering 112–131 (AMAEKRPPRYDGTWRDRDPS) has biased composition (basic and acidic residues). Residues 112–133 (AMAEKRPPRYDGTWRDRDPSEA) are disordered. The 'KMSKS' region motif lies at 238-242 (KLSKR). Residue Lys241 coordinates ATP.

It belongs to the class-I aminoacyl-tRNA synthetase family. Glutamate--tRNA ligase type 1 subfamily. As to quaternary structure, monomer.

The protein localises to the cytoplasm. It catalyses the reaction tRNA(Glu) + L-glutamate + ATP = L-glutamyl-tRNA(Glu) + AMP + diphosphate. Catalyzes the attachment of glutamate to tRNA(Glu) in a two-step reaction: glutamate is first activated by ATP to form Glu-AMP and then transferred to the acceptor end of tRNA(Glu). The sequence is that of Glutamate--tRNA ligase 1 from Gluconobacter oxydans (strain 621H) (Gluconobacter suboxydans).